The sequence spans 318 residues: Pantothenate kinase (318 aa).

ATP is bound at residue 96 to 103 (GSVAVGKS).

It belongs to the prokaryotic pantothenate kinase family.

It is found in the cytoplasm. It catalyses the reaction (R)-pantothenate + ATP = (R)-4'-phosphopantothenate + ADP + H(+). It participates in cofactor biosynthesis; coenzyme A biosynthesis; CoA from (R)-pantothenate: step 1/5. The sequence is that of Pantothenate kinase from Nitrobacter hamburgensis (strain DSM 10229 / NCIMB 13809 / X14).